The following is a 339-amino-acid chain: Deoxyguanosinetriphosphate triphosphohydrolase-like protein (339 aa).

The HD domain maps to 75-186; the sequence is RLTHTLEVAQ…VQISDKIAYI (112 aa).

This sequence belongs to the dGTPase family. Type 2 subfamily.

The polypeptide is Deoxyguanosinetriphosphate triphosphohydrolase-like protein (Caldanaerobacter subterraneus subsp. tengcongensis (strain DSM 15242 / JCM 11007 / NBRC 100824 / MB4) (Thermoanaerobacter tengcongensis)).